The primary structure comprises 256 residues: Imidazole glycerol phosphate synthase subunit HisF (256 aa).

Active-site residues include Asp-11 and Asp-130.

The protein belongs to the HisA/HisF family. As to quaternary structure, heterodimer of HisH and HisF.

The protein localises to the cytoplasm. It carries out the reaction 5-[(5-phospho-1-deoxy-D-ribulos-1-ylimino)methylamino]-1-(5-phospho-beta-D-ribosyl)imidazole-4-carboxamide + L-glutamine = D-erythro-1-(imidazol-4-yl)glycerol 3-phosphate + 5-amino-1-(5-phospho-beta-D-ribosyl)imidazole-4-carboxamide + L-glutamate + H(+). Its pathway is amino-acid biosynthesis; L-histidine biosynthesis; L-histidine from 5-phospho-alpha-D-ribose 1-diphosphate: step 5/9. In terms of biological role, IGPS catalyzes the conversion of PRFAR and glutamine to IGP, AICAR and glutamate. The HisF subunit catalyzes the cyclization activity that produces IGP and AICAR from PRFAR using the ammonia provided by the HisH subunit. The protein is Imidazole glycerol phosphate synthase subunit HisF of Cupriavidus taiwanensis (strain DSM 17343 / BCRC 17206 / CCUG 44338 / CIP 107171 / LMG 19424 / R1) (Ralstonia taiwanensis (strain LMG 19424)).